A 165-amino-acid polypeptide reads, in one-letter code: Ixolaris (165 aa).

The signal sequence occupies residues Met1–Ala26. 2 consecutive BPTI/Kunitz inhibitor domains span residues Cys43 to Cys93 and Cys101 to Cys151. 5 disulfide bridges follow: Cys43–Cys93, Cys51–Cys76, Cys68–Cys89, Cys101–Cys151, and Cys126–Cys147. N-linked (GlcNAc...) asparagine glycosylation is found at Asn90 and Asn123. Residue Asn161 is glycosylated (N-linked (GlcNAc...) asparagine).

Monomer. Interacts with host coagulation factor X/F10 (inactive and activated). In terms of tissue distribution, saliva (at protein level). Salivary gland.

The protein resides in the secreted. In terms of biological role, anticoagulant protein that modulates blood feeding of ticks on vertebrate species. Inhibits activation of host blood coagulation factor X (F10). Inhibits activity of host coagulation factor VIIa-tissue factor (F7-F3) complex in a factor X/Xa-dependent manner. Prevents interaction between host coagulation factor X and activated factor VIIIa (F8). The protein is Ixolaris of Ixodes scapularis (Black-legged tick).